An 833-amino-acid chain; its full sequence is Neurogenic locus protein delta (833 aa).

The signal sequence occupies residues 1–18; sequence MHWIKCLLTAFICFTVIV. The Extracellular segment spans residues 19 to 594; the sequence is QVHSSGSFEL…ARADGLTNAQ (576 aa). Intrachain disulfides connect C46–C61 and C68–C82. Residues N98, N137, and N167 are each glycosylated (N-linked (GlcNAc...) asparagine). The region spanning 182–226 is the DSL domain; it reads VTCDLNYYGSGCAKFCRPRDDSFGHSTCSETGEIICLTGWQGDYC. 30 disulfide bridges follow: C184-C193, C197-C209, C217-C226, C231-C240, C235-C246, C248-C257, C260-C271, C266-C277, C279-C288, C295-C307, C301-C317, C319-C328, C335-C348, C342-C360, C362-C371, C378-C388, C383-C404, C406-C415, C422-C433, C427-C439, C441-C450, C457-C468, C462-C477, C479-C488, C495-C506, C500-C515, C517-C526, C533-C544, C538-C553, and C555-C564. EGF-like domains lie at 227–258, 256–289, 291–329, 331–372, 374–416, and 418–451; these read HIPK…ALCN, LCNE…LYCN, DLNY…DDCE, EIYS…KMCE, KVLT…PNCD, and QLDN…TRCE. One can recognise an EGF-like 7; calcium-binding domain in the interval 453 to 489; the sequence is NIDDCLGHQCENGGTCIDMVNQYRCQCVPGFHGTHCS. One can recognise an EGF-like 8 domain in the interval 491-527; the sequence is KVDLCLIRPCANGGTCLNLNNDYQCTCRAGFTGKDCS. An EGF-like 9; calcium-binding domain is found at 529–565; the sequence is DIDECSSGPCHNGGTCMNRVNSFECVCANGFRGKQCD. Residues 595-617 form a helical membrane-spanning segment; that stretch reads VVLIAVFSVAMPLVAVIAACVVF. The Cytoplasmic portion of the chain corresponds to 618–833; the sequence is CMKRKRKRAQ…RSVVCGTPHM (216 aa). T666 carries the post-translational modification Phosphothreonine. A disordered region spans residues 743–773; that stretch reads QLNTDPTLMHRGSPAGSSAKGASGGGPGAAE. The segment covering 754–763 has biased composition (low complexity); sequence GSPAGSSAKG.

As to quaternary structure, interacts with Notch (N) via the EGF repeats and the N EGF repeats. Post-translationally, ubiquitinated by Mib, leading to its endocytosis and subsequent degradation. In terms of tissue distribution, detected in all areas with neurogenic abilities, for example the neurogenic ectoderm and the primordia of the sense organs. Later expression is restricted to those cells that have adopted a neural fate.

The protein resides in the membrane. Acts as a ligand for Notch (N) receptor. Essential for proper differentiation of ectoderm. Delta is required for the correct separation of neural and epidermal cell lineages. Fringe (fng) acts in the Golgi to determine the type of O-linked fucose on the EGF modules in N, altering the ability of N to bind with Delta. O-fut1 also has a role in modulating the interaction. In Drosophila melanogaster (Fruit fly), this protein is Neurogenic locus protein delta.